We begin with the raw amino-acid sequence, 450 residues long: Chromosomal replication initiator protein DnaA (450 aa).

The interval 1-84 (MTENEQIFWN…AVDYVYEDNL (84 aa)) is domain I, interacts with DnaA modulators. The segment at 84–109 (LMIEQQHQGQQGYTEQAFQQLPAVQS) is domain II. The interval 110–328 (DLNPKYSFDN…GALKDISLVA (219 aa)) is domain III, AAA+ region. ATP contacts are provided by Gly154, Gly156, Lys157, and Thr158. The interval 329–450 (NFKQIDTITV…EIETIKNKIK (122 aa)) is domain IV, binds dsDNA.

Belongs to the DnaA family. As to quaternary structure, oligomerizes as a right-handed, spiral filament on DNA at oriC.

Its subcellular location is the cytoplasm. Plays an essential role in the initiation and regulation of chromosomal replication. ATP-DnaA binds to the origin of replication (oriC) to initiate formation of the DNA replication initiation complex once per cell cycle. Binds the DnaA box (a 9 base pair repeat at the origin) and separates the double-stranded (ds)DNA. Forms a right-handed helical filament on oriC DNA; dsDNA binds to the exterior of the filament while single-stranded (ss)DNA is stabiized in the filament's interior. The ATP-DnaA-oriC complex binds and stabilizes one strand of the AT-rich DNA unwinding element (DUE), permitting loading of DNA polymerase. After initiation quickly degrades to an ADP-DnaA complex that is not apt for DNA replication. Binds acidic phospholipids. The polypeptide is Chromosomal replication initiator protein DnaA (Streptococcus equi subsp. zooepidemicus (strain H70)).